A 223-amino-acid chain; its full sequence is Cytochrome c biogenesis ATP-binding export protein CcmA (223 aa).

The ABC transporter domain maps to 1 to 223 (MRSLACERDE…KSDMAVGNDY (223 aa)). An ATP-binding site is contributed by 31 to 38 (GSNGAGKT).

The protein belongs to the ABC transporter superfamily. CcmA exporter (TC 3.A.1.107) family. In terms of assembly, the complex is composed of two ATP-binding proteins (CcmA) and two transmembrane proteins (CcmB).

Its subcellular location is the cell inner membrane. The enzyme catalyses heme b(in) + ATP + H2O = heme b(out) + ADP + phosphate + H(+). Functionally, part of the ABC transporter complex CcmAB involved in the biogenesis of c-type cytochromes; once thought to export heme, this seems not to be the case, but its exact role is uncertain. Responsible for energy coupling to the transport system. This chain is Cytochrome c biogenesis ATP-binding export protein CcmA, found in Saccharophagus degradans (strain 2-40 / ATCC 43961 / DSM 17024).